A 285-amino-acid polypeptide reads, in one-letter code: Protein pxr1 (285 aa).

Positions Met1–Lys11 are enriched in basic residues. Residues Met1–Arg23 are disordered. Residues Thr25 to Lys79 form the G-patch domain. The segment at Thr144–His263 is disordered. Over residues Gln152 to Leu163 the composition is skewed to basic and acidic residues. Residues Lys190–Lys208 are compositionally biased toward basic residues. The segment covering Arg224 to Arg234 has biased composition (basic and acidic residues). Over residues Met254 to His263 the composition is skewed to basic residues.

It belongs to the PINX1 family.

The protein resides in the nucleus. Its subcellular location is the nucleolus. In terms of biological role, involved in rRNA-processing at A0, A1 and A2 sites and negatively regulates telomerase. The chain is Protein pxr1 (pxr1) from Aspergillus niger (strain ATCC MYA-4892 / CBS 513.88 / FGSC A1513).